A 362-amino-acid chain; its full sequence is Dihydroorotate dehydrogenase (quinone) (362 aa).

FMN contacts are provided by residues 62–66 (AGYDK) and Thr-86. A substrate-binding site is contributed by Lys-66. Residue 111–115 (NRLGF) coordinates substrate. Positions 139 and 170 each coordinate FMN. Asn-170 lines the substrate pocket. Catalysis depends on Ser-173, which acts as the Nucleophile. Asn-175 lines the substrate pocket. 2 residues coordinate FMN: Lys-215 and Ser-243. A substrate-binding site is contributed by 244–245 (NT). Residues Gly-266, Gly-295, and 316 to 317 (YS) each bind FMN.

Belongs to the dihydroorotate dehydrogenase family. Type 2 subfamily. Monomer. The cofactor is FMN.

It localises to the cell membrane. The enzyme catalyses (S)-dihydroorotate + a quinone = orotate + a quinol. It participates in pyrimidine metabolism; UMP biosynthesis via de novo pathway; orotate from (S)-dihydroorotate (quinone route): step 1/1. In terms of biological role, catalyzes the conversion of dihydroorotate to orotate with quinone as electron acceptor. The chain is Dihydroorotate dehydrogenase (quinone) from Sinorhizobium medicae (strain WSM419) (Ensifer medicae).